The chain runs to 487 residues: Benzaldehyde dehydrogenase [NAD(+)] (487 aa).

232–237 (GSTQVG) is an NAD(+) binding site. Active-site residues include E254 and C288.

The protein belongs to the aldehyde dehydrogenase family. As to quaternary structure, homotetramer.

It carries out the reaction benzaldehyde + NAD(+) + H2O = benzoate + NADH + 2 H(+). This Pseudomonas putida (Arthrobacter siderocapsulatus) protein is Benzaldehyde dehydrogenase [NAD(+)] (xylC).